We begin with the raw amino-acid sequence, 116 residues long: NADH-ubiquinone oxidoreductase chain 3 (116 aa).

Transmembrane regions (helical) follow at residues 4 to 24 (LIIT…IAFW), 56 to 76 (FFLI…LLPL), and 88 to 108 (TLIL…YEWI).

The protein belongs to the complex I subunit 3 family. As to quaternary structure, core subunit of respiratory chain NADH dehydrogenase (Complex I) which is composed of 45 different subunits. Interacts with TMEM186. Interacts with TMEM242.

Its subcellular location is the mitochondrion inner membrane. The enzyme catalyses a ubiquinone + NADH + 5 H(+)(in) = a ubiquinol + NAD(+) + 4 H(+)(out). In terms of biological role, core subunit of the mitochondrial membrane respiratory chain NADH dehydrogenase (Complex I) which catalyzes electron transfer from NADH through the respiratory chain, using ubiquinone as an electron acceptor. Essential for the catalytic activity of complex I. This Osphranter robustus (Wallaroo) protein is NADH-ubiquinone oxidoreductase chain 3.